The following is a 180-amino-acid chain: Shikimate kinase (180 aa).

14–19 (GAGKSS) serves as a coordination point for ATP. Residue Ser-18 participates in Mg(2+) binding. Substrate-binding residues include Asp-36, Arg-60, and Gly-82. An ATP-binding site is contributed by Arg-120. Substrate is bound at residue Arg-139.

This sequence belongs to the shikimate kinase family. Monomer. It depends on Mg(2+) as a cofactor.

The protein resides in the cytoplasm. It carries out the reaction shikimate + ATP = 3-phosphoshikimate + ADP + H(+). The protein operates within metabolic intermediate biosynthesis; chorismate biosynthesis; chorismate from D-erythrose 4-phosphate and phosphoenolpyruvate: step 5/7. In terms of biological role, catalyzes the specific phosphorylation of the 3-hydroxyl group of shikimic acid using ATP as a cosubstrate. This chain is Shikimate kinase, found in Xylella fastidiosa (strain M23).